The chain runs to 377 residues: Phospho-N-acetylmuramoyl-pentapeptide-transferase (377 aa).

The next 11 helical transmembrane spans lie at 9 to 29, 59 to 79, 85 to 105, 122 to 142, 155 to 175, 178 to 198, 210 to 230, 247 to 267, 274 to 294, 299 to 319, and 354 to 374; these read YITLRAVLACATALLIGLVAG, TPTMGGALILIAIAISTLLWA, FVWVVLLVTFGFGWIGWMDDY, FFWQATIGLVAAVYLAFAVSA, WVGSGFTMPLPTRADLIVPFF, VSYPLGVLGFVALTWAVIVGT, GLAIMPTVMVGSALGIFAYVV, AAELMVLCAAIGGAGLAFLWF, VFMGDVGALALGGALGTIAVI, IVLFIMGGVFVVETLSVMVQV, and QVVVRFWIITMMLVLVGLSTL.

Belongs to the glycosyltransferase 4 family. MraY subfamily. Mg(2+) serves as cofactor.

It is found in the cell inner membrane. The enzyme catalyses UDP-N-acetyl-alpha-D-muramoyl-L-alanyl-gamma-D-glutamyl-meso-2,6-diaminopimeloyl-D-alanyl-D-alanine + di-trans,octa-cis-undecaprenyl phosphate = di-trans,octa-cis-undecaprenyl diphospho-N-acetyl-alpha-D-muramoyl-L-alanyl-D-glutamyl-meso-2,6-diaminopimeloyl-D-alanyl-D-alanine + UMP. It functions in the pathway cell wall biogenesis; peptidoglycan biosynthesis. In terms of biological role, catalyzes the initial step of the lipid cycle reactions in the biosynthesis of the cell wall peptidoglycan: transfers peptidoglycan precursor phospho-MurNAc-pentapeptide from UDP-MurNAc-pentapeptide onto the lipid carrier undecaprenyl phosphate, yielding undecaprenyl-pyrophosphoryl-MurNAc-pentapeptide, known as lipid I. This Bordetella bronchiseptica (strain ATCC BAA-588 / NCTC 13252 / RB50) (Alcaligenes bronchisepticus) protein is Phospho-N-acetylmuramoyl-pentapeptide-transferase.